The primary structure comprises 136 residues: MSAEQFVGRWKLVESENFEDYLKEVGVGLLLRKAACAAKPTLEIKVNGNKWHVNQLSTFKNTTLEFTLGVEFDETTPDGRQFKSTITIEDGKVVHVQKRIKDSDHDSVITRWFEGEKLITTLQSGSVISRRAYIRE.

Residues Arg111 and 131–133 each bind a fatty acid; that span reads RAY.

Belongs to the calycin superfamily. Fatty-acid binding protein (FABP) family.

The protein is Fatty acid-binding protein homolog 5 (lbp-5) of Caenorhabditis elegans.